Here is an 874-residue protein sequence, read N- to C-terminus: Alanine--tRNA ligase (874 aa).

Zn(2+)-binding residues include His-562, His-566, Cys-665, and His-669.

Belongs to the class-II aminoacyl-tRNA synthetase family. It depends on Zn(2+) as a cofactor.

It is found in the cytoplasm. The catalysed reaction is tRNA(Ala) + L-alanine + ATP = L-alanyl-tRNA(Ala) + AMP + diphosphate. Catalyzes the attachment of alanine to tRNA(Ala) in a two-step reaction: alanine is first activated by ATP to form Ala-AMP and then transferred to the acceptor end of tRNA(Ala). Also edits incorrectly charged Ser-tRNA(Ala) and Gly-tRNA(Ala) via its editing domain. This is Alanine--tRNA ligase from Pseudomonas aeruginosa (strain ATCC 15692 / DSM 22644 / CIP 104116 / JCM 14847 / LMG 12228 / 1C / PRS 101 / PAO1).